Here is a 196-residue protein sequence, read N- to C-terminus: MLLSDVDIQAALEDKLIQIDPFDPQMLQPASLDIRLSRYFRLFNNHTYAYIDPAEPQEALTRLVEVAENQAFVLHPGEFILGSTCETVSLSNDLAARLEGKSSLGRLGLLTHSTAGFIDPGFSGQITLELGNVATLPIKLWPGMKIGQLCFFQLSSPAKNAYGSPVCASRYQGQRGPTASLSHQHFYRARFTEIGL.

DCTP-binding positions include 101-106 (KSSLGR), Asp119, 127-129 (TLE), Gln148, Tyr162, and Gln174. Glu129 serves as the catalytic Proton donor/acceptor.

Belongs to the dCTP deaminase family. Homotrimer.

The catalysed reaction is dCTP + 2 H2O = dUMP + NH4(+) + diphosphate. It participates in pyrimidine metabolism; dUMP biosynthesis; dUMP from dCTP: step 1/1. Functionally, bifunctional enzyme that catalyzes both the deamination of dCTP to dUTP and the hydrolysis of dUTP to dUMP without releasing the toxic dUTP intermediate. The sequence is that of dCTP deaminase, dUMP-forming from Tropheryma whipplei (strain TW08/27) (Whipple's bacillus).